The sequence spans 704 residues: Rabphilin-3A (704 aa).

Over residues 1–12 the composition is skewed to polar residues; the sequence is MTDTVFSSSSSR. The interval 1–52 is disordered; sequence MTDTVFSSSSSRWMCPSDRPLQSNDKEQLQTGWSVHPSGQPDRQRKQEELTD. The RabBD domain maps to 44-161; that stretch reads QRKQEELTDE…KRSGAWFFKG (118 aa). The segment at 92–149 adopts an FYVE-type zinc-finger fold; the sequence is GDGVNRCILCGEQLGMLGSACVVCEDCKKNVCTKCGVETSNNRPHPVWLCKICIEQRE. The Zn(2+) site is built by Cys-98, Cys-101, Cys-115, Cys-118, Cys-123, Cys-126, Cys-141, and Cys-144. Residues 167–398 form a disordered region; the sequence is LPQPMPIKKN…EEEANSYDSD (232 aa). Basic and acidic residues predominate over residues 205-214; it reads TRGDTEDRRG. Residue Arg-229 is modified to Omega-N-methylarginine. Ser-277 bears the Phosphoserine mark. The segment covering 279–290 has biased composition (low complexity); the sequence is QASRPAPASMQS. Pro residues predominate over residues 291–310; sequence PAPPQPGQPGPPGGSRPSPG. Residues 366–380 show a composition bias toward low complexity; it reads QASAAAPQPVVASAR. A compositionally biased stretch (acidic residues) spans 385-398; the sequence is PEEDEEEANSYDSD. The C2 1 domain maps to 402 to 524; sequence TLGALEFSLL…KPNQRKNFNI (123 aa). Ca(2+) is bound by residues Met-432, Asp-433, Asp-439, Asp-494, Glu-495, Asp-496, Glu-502, Glu-549, Asp-591, Asp-597, Asp-651, Tyr-652, Asp-653, and Asp-659. A C2 2 domain is found at 560-693; sequence ERGKILVSLM…NKDKKIERWH (134 aa). 2 positions are modified to phosphoserine: Ser-702 and Ser-703.

In terms of assembly, interacts with RAB3B, RAB3C, RAB3D, RAB8A, RAB27A and RAB27B. Interacts with RAB3A; this interaction recruits RPH3A to synaptic vesicules. Interacts (via C2B domain) with SNAP25. Interacts with deubiquitinating enzyme CAND1; this interaction results in the deubiquitination of RPH3A. Interacts with GRIN2A and DLG4; this ternary complex regulates NMDA receptor composition at postsynaptic membranes. Interacts with SNCA. Requires Ca(2+) as cofactor. Ubiquitinated. Deubiquitinated by CAND1 to prevent its degradation. As to expression, specifically expressed in brain.

It is found in the cytoplasmic vesicle. It localises to the secretory vesicle. The protein localises to the synaptic vesicle membrane. Its subcellular location is the cell projection. The protein resides in the dendritic spine. It is found in the postsynaptic cell membrane. It localises to the membrane. Plays an essential role in docking and fusion steps of regulated exocytosis. At the presynaptic level, RPH3A is recruited by RAB3A to the synaptic vesicle membrane in a GTP-dependent manner where it modulates synaptic vesicle trafficking and calcium-triggered neurotransmitter release. In the post-synaptic compartment, forms a ternary complex with GRIN2A and DLG4 and regulates NMDA receptor stability. Also plays a role in the exocytosis of arginine vasopressin hormone. The polypeptide is Rabphilin-3A (RPH3A) (Bos taurus (Bovine)).